We begin with the raw amino-acid sequence, 387 residues long: Pepsin II-1 (387 aa).

The N-terminal stretch at 1–15 is a signal peptide; it reads MKWLLLLGLLALSEC. A propeptide spans 16–59 (activation peptide); sequence IVHKVPLVRKKSLRKNLIEKGLLQDYLKTHTPNLATKYFPKETF. In terms of domain architecture, Peptidase A1 spans 75-384; that stretch reads YFGTISIGTP…DRANNQVGLA (310 aa). The active site involves Asp93. Cys106 and Cys111 are disulfide-bonded. Residue Ser129 is modified to Phosphoserine. Cysteines 267 and 271 form a disulfide. Asp276 is a catalytic residue. An intrachain disulfide couples Cys310 to Cys343.

It belongs to the peptidase A1 family.

It is found in the secreted. It catalyses the reaction Preferential cleavage: hydrophobic, preferably aromatic, residues in P1 and P1' positions. Cleaves 1-Phe-|-Val-2, 4-Gln-|-His-5, 13-Glu-|-Ala-14, 14-Ala-|-Leu-15, 15-Leu-|-Tyr-16, 16-Tyr-|-Leu-17, 23-Gly-|-Phe-24, 24-Phe-|-Phe-25 and 25-Phe-|-Tyr-26 bonds in the B chain of insulin.. Its function is as follows. Shows particularly broad specificity; although bonds involving phenylalanine and leucine are preferred, many others are also cleaved to some extent. The chain is Pepsin II-1 from Oryctolagus cuniculus (Rabbit).